The following is a 338-amino-acid chain: Lipoate-protein ligase A (338 aa).

One can recognise a BPL/LPL catalytic domain in the interval 29 to 216; that stretch reads PATQRVLFLW…AFFAHYGERV (188 aa). ATP is bound by residues arginine 71, 76–79, and lysine 134; that span reads GAVF. Position 134 (lysine 134) interacts with (R)-lipoate.

This sequence belongs to the LplA family. As to quaternary structure, monomer.

It is found in the cytoplasm. The enzyme catalyses L-lysyl-[lipoyl-carrier protein] + (R)-lipoate + ATP = N(6)-[(R)-lipoyl]-L-lysyl-[lipoyl-carrier protein] + AMP + diphosphate + H(+). It participates in protein modification; protein lipoylation via exogenous pathway; protein N(6)-(lipoyl)lysine from lipoate: step 1/2. The protein operates within protein modification; protein lipoylation via exogenous pathway; protein N(6)-(lipoyl)lysine from lipoate: step 2/2. In terms of biological role, catalyzes both the ATP-dependent activation of exogenously supplied lipoate to lipoyl-AMP and the transfer of the activated lipoyl onto the lipoyl domains of lipoate-dependent enzymes. This Escherichia coli O1:K1 / APEC protein is Lipoate-protein ligase A.